Here is a 647-residue protein sequence, read N- to C-terminus: Threonine--tRNA ligase (647 aa).

The TGS domain maps to 1–63; sequence MYMIQLTFPD…EHDGKIELVM (63 aa). The tract at residues 247 to 544 is catalytic; that stretch reads DHRKLGKELD…LIEEYKGAFP (298 aa). 3 residues coordinate Zn(2+): C340, H391, and H521.

This sequence belongs to the class-II aminoacyl-tRNA synthetase family. As to quaternary structure, homodimer. It depends on Zn(2+) as a cofactor.

Its subcellular location is the cytoplasm. It catalyses the reaction tRNA(Thr) + L-threonine + ATP = L-threonyl-tRNA(Thr) + AMP + diphosphate + H(+). Its function is as follows. Catalyzes the attachment of threonine to tRNA(Thr) in a two-step reaction: L-threonine is first activated by ATP to form Thr-AMP and then transferred to the acceptor end of tRNA(Thr). Also edits incorrectly charged L-seryl-tRNA(Thr). In Exiguobacterium sp. (strain ATCC BAA-1283 / AT1b), this protein is Threonine--tRNA ligase.